Reading from the N-terminus, the 61-residue chain is DNA-directed RNA polymerase subunit Rpo10 (61 aa).

Residues Cys-6, Cys-9, Cys-42, and Cys-43 each contribute to the Zn(2+) site.

Belongs to the archaeal Rpo10/eukaryotic RPB10 RNA polymerase subunit family. As to quaternary structure, part of the RNA polymerase complex. Zn(2+) serves as cofactor.

It is found in the cytoplasm. The catalysed reaction is RNA(n) + a ribonucleoside 5'-triphosphate = RNA(n+1) + diphosphate. Its function is as follows. DNA-dependent RNA polymerase (RNAP) catalyzes the transcription of DNA into RNA using the four ribonucleoside triphosphates as substrates. This chain is DNA-directed RNA polymerase subunit Rpo10, found in Methanothrix thermoacetophila (strain DSM 6194 / JCM 14653 / NBRC 101360 / PT) (Methanosaeta thermophila).